Reading from the N-terminus, the 189-residue chain is T-cell surface glycoprotein CD3 epsilon chain (189 aa).

Positions 1-21 are cleaved as a signal peptide; sequence MRWNTFWGILCLSLLAVGTCQ. Residues 23 to 99 form the Ig-like domain; sequence DAENIEYKVS…KNTYLYLKAR (77 aa). Over 23-108 the chain is Extracellular; that stretch reads DAENIEYKVS…RVCEYCVEVD (86 aa). A disulfide bond links C42 and C83. A helical transmembrane segment spans residues 109 to 134; the sequence is LTAVAIIIIVDICITLGLLMVIYYWS. At 135 to 189 the chain is on the cytoplasmic side; it reads KNRKAKAKPVTRGTGAGSRPRGQNKERPPPVPNPDYEPIRKGQRDLYSGLNQRAV. Residues 143 to 189 are disordered; that stretch reads PVTRGTGAGSRPRGQNKERPPPVPNPDYEPIRKGQRDLYSGLNQRAV. The NUMB-binding region stretch occupies residues 157–174; that stretch reads QNKERPPPVPNPDYEPIR. The 28-residue stretch at 160–187 folds into the ITAM domain; that stretch reads ERPPPVPNPDYEPIRKGQRDLYSGLNQR. The interval 161 to 168 is proline-rich sequence; sequence RPPPVPNP. Residues Y170 and Y181 each carry the phosphotyrosine modification.

The TCR-CD3 complex is composed of a CD3D/CD3E and a CD3G/CD3E heterodimers that preferentially associate with TCRalpha and TCRbeta, respectively, to form TCRalpha/CD3E/CD3G and TCRbeta/CD3G/CD3E trimers. In turn, the hexamer interacts with CD3Z homodimer to form the TCR-CD3 complex. Alternatively, TCRalpha and TCRbeta can be replaced by TCRgamma and TCRdelta. Interacts with CD6. Interacts (via Proline-rich sequence) with NCK1; the interaction is ligand dependent but independent of tyrosine kinase activation. In terms of processing, phosphorylated on Tyr residues after T-cell receptor triggering by LCK in association with CD4/CD8.

It localises to the cell membrane. In terms of biological role, part of the TCR-CD3 complex present on T-lymphocyte cell surface that plays an essential role in adaptive immune response. When antigen presenting cells (APCs) activate T-cell receptor (TCR), TCR-mediated signals are transmitted across the cell membrane by the CD3 chains CD3D, CD3E, CD3G and CD3Z. All CD3 chains contain immunoreceptor tyrosine-based activation motifs (ITAMs) in their cytoplasmic domain. Upon TCR engagement, these motifs become phosphorylated by Src family protein tyrosine kinases LCK and FYN, resulting in the activation of downstream signaling pathways. In addition of this role of signal transduction in T-cell activation, CD3E plays an essential role in correct T-cell development. Also participates in internalization and cell surface down-regulation of TCR-CD3 complexes via endocytosis sequences present in CD3E cytosolic region. In addition to its role as a TCR coreceptor, it serves as a receptor for ITPRIPL1. Ligand recognition inhibits T-cell activation by promoting interaction with NCK1, which prevents CD3E-ZAP70 interaction and blocks the ERK-NFkB signaling cascade and calcium influx. This Mus musculus (Mouse) protein is T-cell surface glycoprotein CD3 epsilon chain (Cd3e).